A 243-amino-acid chain; its full sequence is Zinc import ATP-binding protein ZnuC (243 aa).

Residues 25–242 (LVVDSITLFY…AKFMSVFPEN (218 aa)) form the ABC transporter domain. ATP is bound at residue 57-64 (GPNGGGKT).

It belongs to the ABC transporter superfamily. Zinc importer (TC 3.A.1.15.5) family. The complex is composed of two ATP-binding proteins (ZnuC), two transmembrane proteins (ZnuB) and a solute-binding protein (ZnuA).

It is found in the cell inner membrane. The catalysed reaction is Zn(2+)(out) + ATP(in) + H2O(in) = Zn(2+)(in) + ADP(in) + phosphate(in) + H(+)(in). Its function is as follows. Part of the ABC transporter complex ZnuABC involved in zinc import. Responsible for energy coupling to the transport system. This chain is Zinc import ATP-binding protein ZnuC, found in Anaplasma phagocytophilum (strain HZ).